A 430-amino-acid chain; its full sequence is Histidine--tRNA ligase (430 aa).

Belongs to the class-II aminoacyl-tRNA synthetase family. Homodimer.

The protein localises to the cytoplasm. It catalyses the reaction tRNA(His) + L-histidine + ATP = L-histidyl-tRNA(His) + AMP + diphosphate + H(+). The polypeptide is Histidine--tRNA ligase (Anaplasma marginale (strain St. Maries)).